Here is a 686-residue protein sequence, read N- to C-terminus: APPKTTVRWCTISSAEEKKCNSLKDHMQQERVTLSCVQKATYLDCIKAISNNEADAISLDGGQVFEAGLAPYKLKPIAAEVYERSGGSTTSYYAVAVVKKGTDFMIKDLRGKTSCHTGLGRSAGWNIPIGTLIHREDIEWEGIESGISEQAVAKFFSASCVPGATIEQKLCRQCKGDAKTKCLRNGPYSGYSGAFQCLKDGKGDVAFVKHTTVQENAPEEKDEYELLCLDGSRQPVDSYKTCNWARVAAHAVVARDDSKIDDIWSFLGMQAYSLGVDTTSDFHLFGPPGKKDPVLKDLLFKDSAIMLKRVPELMDSQLYLGFEYYSAIQSLRKDQLTVGPRENKIQWCAVGKDEKSKCDRWSVVSNGEVECTILDDNKDCIVKITKGEADAISLDGGFVYTAGVCGLVPVVGESYEDETQCSKDEEQPAYYFAVAVVKKSSAITWNNLQGKKSCHTAVGRTAGWNIPMGLIHNKTGSCDFDDYFSEGCAPGSPPNSRLCKLCQGSGENLLEKCVASSHEKYYGYTGALRCLVEQGDVAFIKHSTVGENVSGSNKDDWAKGLTRDDFELLCTNGKRAKTMDYKTCHLAKVPTHAVVARPEKANKIRELLEGQEKLFGLHGTEKERFMMFQSQTKDLLFKALTKCLVKLRQGITYKEFLGDEYYASVASLNTCNPSDLLQVCTFLEDK.

2 consecutive Transferrin-like domains span residues 7–333 (VRWC…SLRK) and 345–670 (IQWC…SLNT). Disulfide bonds link C10–C45, C20–C36, C115–C197, C160–C174, C171–C182, and C228–C242. The tract at residues 333 to 341 (KDQLTVGPR) is connecting region. Cystine bridges form between C348-C380, C358-C371, C405-C680, C421-C643, C454-C530, C478-C671, C488-C502, C499-C513, and C570-C584. N-linked (GlcNAc...) asparagine glycosylation is present at N473. A glycan (N-linked (GlcNAc...) asparagine) is linked at N548.

It belongs to the transferrin family. Monomer.

Its subcellular location is the secreted. Transferrins are iron binding transport proteins which can bind two Fe(3+) ions in association with the binding of an anion, usually bicarbonate. It is responsible for the transport of iron from sites of absorption and heme degradation to those of storage and utilization. Serum transferrin may also have a further role in stimulating cell proliferation. Its function is as follows. Ovotransferrin has a bacteriostatic function. Its concentration in avian egg is the highest concentration of any transferrin in vivo. This Anas platyrhynchos (Mallard) protein is Ovotransferrin.